Consider the following 1051-residue polypeptide: Protein ALWAYS EARLY 2 (1051 aa).

Basic residues-rich tracts occupy residues 1–11 and 27–36; these read MAPVRKSRSVN and SKKNKLRKKL. The interval 1-37 is disordered; sequence MAPVRKSRSVNKRFTNETSPRKDAGKSKKNKLRKKLS. The SANT domain occupies 39–93; sequence KLGPQWTRLELERFYDAYRKHGQEWRRVAAAIRNSRSVDMVEALFNMNRAYLSLP. Disordered stretches follow at residues 114–158, 170–210, 225–293, 323–375, 397–605, and 948–981; these read EGSG…IGSP, ANGT…RKQF, TDAS…KDTT, AECN…TSGA, SELS…SSRS, and SIEH…NAQM. Residues 120–130 show a composition bias toward basic and acidic residues; sequence GEGHDASEVPR. Basic residues predominate over residues 131–140; it reads KQQKRKRAKP. Residues 279-293 show a composition bias toward basic and acidic residues; the sequence is ESSRERKLDSDKDTT. A compositionally biased stretch (acidic residues) spans 323–332; the sequence is AECNDSDDNG. 2 stretches are compositionally biased toward basic and acidic residues: residues 350–372 and 403–417; these read AAIE…DKHT and LKEE…EKSS. The span at 560 to 574 shows a compositional bias: polar residues; that stretch reads KQVSDSGPTSLSQKP. Residues 586–597 show a composition bias toward basic and acidic residues; that stretch reads LQEKAKSSETTH. Over residues 967 to 981 the composition is skewed to polar residues; it reads NDLNSQDGSEKNAQM.

As to quaternary structure, interacts with SNL1 (via PAH3). As to expression, expressed ubiquitously in vegetative and reproductive tissues.

Its subcellular location is the nucleus. The polypeptide is Protein ALWAYS EARLY 2 (ALY2) (Arabidopsis thaliana (Mouse-ear cress)).